A 497-amino-acid polypeptide reads, in one-letter code: UDP-N-acetylmuramoyl-L-alanyl-D-glutamate--2,6-diaminopimelate ligase (497 aa).

Ser32 is a binding site for UDP-N-acetyl-alpha-D-muramoyl-L-alanyl-D-glutamate. ATP is bound at residue 113-119 (GTNGKTT). Residues 155 to 156 (TT), Ser182, Gln188, and Arg190 contribute to the UDP-N-acetyl-alpha-D-muramoyl-L-alanyl-D-glutamate site. Lys222 is modified (N6-carboxylysine). Residues Arg385, 409–412 (DNPR), Gly460, and Glu464 each bind meso-2,6-diaminopimelate. The short motif at 409-412 (DNPR) is the Meso-diaminopimelate recognition motif element.

This sequence belongs to the MurCDEF family. MurE subfamily. Mg(2+) is required as a cofactor. In terms of processing, carboxylation is probably crucial for Mg(2+) binding and, consequently, for the gamma-phosphate positioning of ATP.

It is found in the cytoplasm. It catalyses the reaction UDP-N-acetyl-alpha-D-muramoyl-L-alanyl-D-glutamate + meso-2,6-diaminopimelate + ATP = UDP-N-acetyl-alpha-D-muramoyl-L-alanyl-gamma-D-glutamyl-meso-2,6-diaminopimelate + ADP + phosphate + H(+). Its pathway is cell wall biogenesis; peptidoglycan biosynthesis. Catalyzes the addition of meso-diaminopimelic acid to the nucleotide precursor UDP-N-acetylmuramoyl-L-alanyl-D-glutamate (UMAG) in the biosynthesis of bacterial cell-wall peptidoglycan. This is UDP-N-acetylmuramoyl-L-alanyl-D-glutamate--2,6-diaminopimelate ligase from Thermosynechococcus vestitus (strain NIES-2133 / IAM M-273 / BP-1).